The following is a 53-amino-acid chain: ATP synthase protein 8 (53 aa).

Residues 4-24 (MAPISWLLLFIIFSITFILFC) traverse the membrane as a helical segment.

It belongs to the ATPase protein 8 family. As to quaternary structure, F-type ATPases have 2 components, CF(1) - the catalytic core - and CF(0) - the membrane proton channel.

It is found in the mitochondrion membrane. In terms of biological role, mitochondrial membrane ATP synthase (F(1)F(0) ATP synthase or Complex V) produces ATP from ADP in the presence of a proton gradient across the membrane which is generated by electron transport complexes of the respiratory chain. F-type ATPases consist of two structural domains, F(1) - containing the extramembraneous catalytic core and F(0) - containing the membrane proton channel, linked together by a central stalk and a peripheral stalk. During catalysis, ATP synthesis in the catalytic domain of F(1) is coupled via a rotary mechanism of the central stalk subunits to proton translocation. Part of the complex F(0) domain. Minor subunit located with subunit a in the membrane. This is ATP synthase protein 8 (mt:ATPase8) from Drosophila sechellia (Fruit fly).